Here is an 86-residue protein sequence, read N- to C-terminus: Putative membrane protein insertion efficiency factor (86 aa).

Belongs to the UPF0161 family.

The protein localises to the cell inner membrane. In terms of biological role, could be involved in insertion of integral membrane proteins into the membrane. This chain is Putative membrane protein insertion efficiency factor, found in Haemophilus influenzae (strain 86-028NP).